Here is a 520-residue protein sequence, read N- to C-terminus: 3-phosphoshikimate 1-carboxyvinyltransferase, chloroplastic (520 aa).

A chloroplast-targeting transit peptide spans 1-76 (MAQISSMAQG…RISASVATAE (76 aa)). 3-phosphoshikimate-binding residues include Lys-99, Ser-100, and Arg-104. Lys-99 is a binding site for phosphoenolpyruvate. Positions 177 and 207 each coordinate phosphoenolpyruvate. 3-phosphoshikimate-binding residues include Ser-254, Ser-255, Gln-256, Ser-282, Asp-407, and Lys-434. Gln-256 lines the phosphoenolpyruvate pocket. The active-site Proton acceptor is the Asp-407. Residues Arg-438, Arg-480, and Lys-505 each coordinate phosphoenolpyruvate.

It belongs to the EPSP synthase family.

It localises to the plastid. It is found in the chloroplast. It carries out the reaction 3-phosphoshikimate + phosphoenolpyruvate = 5-O-(1-carboxyvinyl)-3-phosphoshikimate + phosphate. It participates in metabolic intermediate biosynthesis; chorismate biosynthesis; chorismate from D-erythrose 4-phosphate and phosphoenolpyruvate: step 6/7. Its function is as follows. Catalyzes the transfer of the enolpyruvyl moiety of phosphoenolpyruvate (PEP) to the 5-hydroxyl of shikimate-3-phosphate (S3P) to produce enolpyruvyl shikimate-3-phosphate and inorganic phosphate. In Solanum lycopersicum (Tomato), this protein is 3-phosphoshikimate 1-carboxyvinyltransferase, chloroplastic.